Here is a 123-residue protein sequence, read N- to C-terminus: Fluoride-specific ion channel FluC (123 aa).

4 helical membrane-spanning segments follow: residues 5 to 25 (LIIGIGGFIGAILRYVISGII), 29 to 49 (FGIPTGTFIVNLIGSFIVGFV), 65 to 85 (LIITGFCGALTTFSTFSYETF), and 94 to 114 (IKFLTNIFINVMGCLIMIYVG). Residues glycine 72 and threonine 75 each coordinate Na(+).

Belongs to the fluoride channel Fluc/FEX (TC 1.A.43) family.

Its subcellular location is the cell membrane. The enzyme catalyses fluoride(in) = fluoride(out). With respect to regulation, na(+) is not transported, but it plays an essential structural role and its presence is essential for fluoride channel function. Its function is as follows. Fluoride-specific ion channel. Important for reducing fluoride concentration in the cell, thus reducing its toxicity. The protein is Fluoride-specific ion channel FluC of Methanococcus aeolicus (strain ATCC BAA-1280 / DSM 17508 / OCM 812 / Nankai-3).